Here is a 147-residue protein sequence, read N- to C-terminus: Large ribosomal subunit protein uL13 (147 aa).

This sequence belongs to the universal ribosomal protein uL13 family. In terms of assembly, part of the 50S ribosomal subunit.

This protein is one of the early assembly proteins of the 50S ribosomal subunit, although it is not seen to bind rRNA by itself. It is important during the early stages of 50S assembly. This chain is Large ribosomal subunit protein uL13, found in Mycolicibacterium paratuberculosis (strain ATCC BAA-968 / K-10) (Mycobacterium paratuberculosis).